Here is a 239-residue protein sequence, read N- to C-terminus: Tetraspanin-9 (239 aa).

3 helical membrane-spanning segments follow: residues 14-34, 56-76, and 86-106; these read FLFN…GIWL, LVIA…LGAI, and FFIV…LFFV. Residues Asn180 and Asn181 are each glycosylated (N-linked (GlcNAc...) asparagine). A helical transmembrane segment spans residues 204–224; it reads VLGTVGMCLLITQILGMAFSM.

This sequence belongs to the tetraspanin (TM4SF) family. As to quaternary structure, found in a complex with GP6. Glycosylated.

The protein resides in the membrane. The protein is Tetraspanin-9 (TSPAN9) of Ovis aries (Sheep).